The chain runs to 174 residues: Shikimate kinase 2 (174 aa).

An ATP-binding site is contributed by 12-17; the sequence is GCGKTT. The Mg(2+) site is built by Thr-16 and Asp-32. Asp-34, Arg-58, and Gly-79 together coordinate substrate. Positions 112-126 are LID domain; the sequence is EAYPLADQRPTLTGR. Position 120 (Arg-120) interacts with ATP. Residue Arg-139 participates in substrate binding. Gln-155 contributes to the ATP binding site.

Belongs to the shikimate kinase family. AroL subfamily. As to quaternary structure, monomer. It depends on Mg(2+) as a cofactor.

It localises to the cytoplasm. It carries out the reaction shikimate + ATP = 3-phosphoshikimate + ADP + H(+). It functions in the pathway metabolic intermediate biosynthesis; chorismate biosynthesis; chorismate from D-erythrose 4-phosphate and phosphoenolpyruvate: step 5/7. Its function is as follows. Catalyzes the specific phosphorylation of the 3-hydroxyl group of shikimic acid using ATP as a cosubstrate. The chain is Shikimate kinase 2 from Erwinia tasmaniensis (strain DSM 17950 / CFBP 7177 / CIP 109463 / NCPPB 4357 / Et1/99).